A 485-amino-acid chain; its full sequence is UBX domain-containing protein 11 (485 aa).

Residues 1–26 (MSSPLASLSKTRKVPLESEPVNPGRR) form a disordered region. Residues 67 to 143 (HDSELLTSMA…VGEMERFLND (77 aa)) adopt a coiled-coil conformation. The 65-residue stretch at 224–288 (LEPIPLKLYR…VSDLRNQVYP (65 aa)) folds into the SEP domain. The UBX domain occupies 386 to 463 (PVPPLSMLRI…GLVPNATLLL (78 aa)). Phosphoserine occurs at positions 479 and 483.

In terms of assembly, interacts with GNA12, GNA13, RND1, RND2 and RND3. In terms of tissue distribution, strongly expressed in testis. Also expressed in lung, brain and thymus.

It localises to the cytoplasm. The protein localises to the cytoskeleton. In terms of biological role, may be involved in the reorganization of actin cytoskeleton mediated by RND1, RND2 and RND3. Promotes RHOA activation mediated by GNA12 and GNA13. The chain is UBX domain-containing protein 11 (Ubxn11) from Rattus norvegicus (Rat).